We begin with the raw amino-acid sequence, 143 residues long: Peptide methionine sulfoxide reductase MsrB (143 aa).

The 124-residue stretch at 16–139 (DAELRRRLTP…NSAALNFESR (124 aa)) folds into the MsrB domain. Zn(2+)-binding residues include C55, C58, C104, and C107. C128 (nucleophile) is an active-site residue.

The protein belongs to the MsrB Met sulfoxide reductase family. Requires Zn(2+) as cofactor.

The catalysed reaction is L-methionyl-[protein] + [thioredoxin]-disulfide + H2O = L-methionyl-(R)-S-oxide-[protein] + [thioredoxin]-dithiol. This is Peptide methionine sulfoxide reductase MsrB from Burkholderia lata (strain ATCC 17760 / DSM 23089 / LMG 22485 / NCIMB 9086 / R18194 / 383).